Consider the following 283-residue polypeptide: 4-diphosphocytidyl-2-C-methyl-D-erythritol kinase (283 aa).

Residue Lys12 is part of the active site. Residue 94 to 104 (PAQAGLGGGSS) coordinates ATP. The active site involves Asp136.

The protein belongs to the GHMP kinase family. IspE subfamily.

It catalyses the reaction 4-CDP-2-C-methyl-D-erythritol + ATP = 4-CDP-2-C-methyl-D-erythritol 2-phosphate + ADP + H(+). The protein operates within isoprenoid biosynthesis; isopentenyl diphosphate biosynthesis via DXP pathway; isopentenyl diphosphate from 1-deoxy-D-xylulose 5-phosphate: step 3/6. Its function is as follows. Catalyzes the phosphorylation of the position 2 hydroxy group of 4-diphosphocytidyl-2C-methyl-D-erythritol. The chain is 4-diphosphocytidyl-2-C-methyl-D-erythritol kinase from Acidovorax ebreus (strain TPSY) (Diaphorobacter sp. (strain TPSY)).